A 314-amino-acid chain; its full sequence is Small ribosomal subunit protein uS11m (314 aa).

Residues M1–S37 constitute a mitochondrion transit peptide. A disordered region spans residues D34 to S138. Residues E50–I63 show a composition bias toward polar residues. A compositionally biased stretch (low complexity) spans S103–P114.

It belongs to the universal ribosomal protein uS11 family. In terms of assembly, component of the mitochondrial ribosome small subunit (28S) which comprises a 12S rRNA and about 30 distinct proteins.

It is found in the mitochondrion. Functionally, required for karyogamy during female gametophyte development, when the two polar nuclei fuse to form the diploid central cell nucleus. The polypeptide is Small ribosomal subunit protein uS11m (Arabidopsis thaliana (Mouse-ear cress)).